We begin with the raw amino-acid sequence, 159 residues long: MAKEQGRKLIAQNKKARHDYHIEDTYEAGLVLQGTEVKSLRQGRASLVDGFVDIDRGEAWLHGVHIPEYSQGTWTNHAARRKRKLLLNRDEIDKIERRVNEKGLTVVPLALYFKDGRAKVEIALAKGKKSWDKRAALAERQANRETEQAVGRRLKGMHD.

Over residues 137-147 (LAERQANRETE) the composition is skewed to basic and acidic residues. The tract at residues 137–159 (LAERQANRETEQAVGRRLKGMHD) is disordered.

This sequence belongs to the SmpB family.

It localises to the cytoplasm. In terms of biological role, required for rescue of stalled ribosomes mediated by trans-translation. Binds to transfer-messenger RNA (tmRNA), required for stable association of tmRNA with ribosomes. tmRNA and SmpB together mimic tRNA shape, replacing the anticodon stem-loop with SmpB. tmRNA is encoded by the ssrA gene; the 2 termini fold to resemble tRNA(Ala) and it encodes a 'tag peptide', a short internal open reading frame. During trans-translation Ala-aminoacylated tmRNA acts like a tRNA, entering the A-site of stalled ribosomes, displacing the stalled mRNA. The ribosome then switches to translate the ORF on the tmRNA; the nascent peptide is terminated with the 'tag peptide' encoded by the tmRNA and targeted for degradation. The ribosome is freed to recommence translation, which seems to be the essential function of trans-translation. This chain is SsrA-binding protein, found in Nocardioides sp. (strain ATCC BAA-499 / JS614).